Consider the following 225-residue polypeptide: MIALVPAAGSGSRFGAPSPKQYLQLNGKPLMWHTLATVAAVPDVDEVAVVISPQDEWFDDFAWDLPKLSVHRVGGASRAQSVASGLAALACADDDWVLVHDAARCCLSVAAVERLIAALSGHAVGGLLALPVPDTVKRADIDGHVAATVPRNGLWLAQTPQMFRAGLLARALSSAAAEDITDEASAVERLGVKPLLVEGDAQNFKITYPRDLALARAILAARDEY.

It belongs to the IspD/TarI cytidylyltransferase family. IspD subfamily.

It carries out the reaction 2-C-methyl-D-erythritol 4-phosphate + CTP + H(+) = 4-CDP-2-C-methyl-D-erythritol + diphosphate. The protein operates within isoprenoid biosynthesis; isopentenyl diphosphate biosynthesis via DXP pathway; isopentenyl diphosphate from 1-deoxy-D-xylulose 5-phosphate: step 2/6. Catalyzes the formation of 4-diphosphocytidyl-2-C-methyl-D-erythritol from CTP and 2-C-methyl-D-erythritol 4-phosphate (MEP). The polypeptide is 2-C-methyl-D-erythritol 4-phosphate cytidylyltransferase (Chromobacterium violaceum (strain ATCC 12472 / DSM 30191 / JCM 1249 / CCUG 213 / NBRC 12614 / NCIMB 9131 / NCTC 9757 / MK)).